The chain runs to 207 residues: Large ribosomal subunit protein uL4 (207 aa).

Residues 52–77 (RGWADVSGGGRKPWRQKGTGRARAGS) form a disordered region.

Belongs to the universal ribosomal protein uL4 family. As to quaternary structure, part of the 50S ribosomal subunit.

In terms of biological role, one of the primary rRNA binding proteins, this protein initially binds near the 5'-end of the 23S rRNA. It is important during the early stages of 50S assembly. It makes multiple contacts with different domains of the 23S rRNA in the assembled 50S subunit and ribosome. Forms part of the polypeptide exit tunnel. The chain is Large ribosomal subunit protein uL4 from Moorella thermoacetica (strain ATCC 39073 / JCM 9320).